Reading from the N-terminus, the 727-residue chain is DNA ligase (727 aa).

NAD(+) is bound by residues 71–75 (DGEFD), 120–121 (SL), and Glu150. Lys152 acts as the N6-AMP-lysine intermediate in catalysis. Residues Arg173, Glu213, Lys329, and Lys353 each contribute to the NAD(+) site. Zn(2+) is bound by residues Cys447, Cys450, Cys466, and Cys472. Residues 636–725 (SIERHLTGLS…PEAAAEAALP (90 aa)) enclose the BRCT domain.

It belongs to the NAD-dependent DNA ligase family. LigA subfamily. Requires Mg(2+) as cofactor. Mn(2+) is required as a cofactor.

The enzyme catalyses NAD(+) + (deoxyribonucleotide)n-3'-hydroxyl + 5'-phospho-(deoxyribonucleotide)m = (deoxyribonucleotide)n+m + AMP + beta-nicotinamide D-nucleotide.. Functionally, DNA ligase that catalyzes the formation of phosphodiester linkages between 5'-phosphoryl and 3'-hydroxyl groups in double-stranded DNA using NAD as a coenzyme and as the energy source for the reaction. It is essential for DNA replication and repair of damaged DNA. This is DNA ligase from Saccharopolyspora erythraea (strain ATCC 11635 / DSM 40517 / JCM 4748 / NBRC 13426 / NCIMB 8594 / NRRL 2338).